Here is a 243-residue protein sequence, read N- to C-terminus: Small ribosomal subunit protein uS2 (243 aa).

The protein belongs to the universal ribosomal protein uS2 family.

This Aliivibrio salmonicida (strain LFI1238) (Vibrio salmonicida (strain LFI1238)) protein is Small ribosomal subunit protein uS2.